The following is a 545-amino-acid chain: Germacrene D synthase 1 (545 aa).

Mg(2+)-binding residues include aspartate 298, aspartate 302, asparagine 443, and glutamate 451. The DDXXD motif signature appears at 298–302; that stretch reads DDTFD.

This sequence belongs to the terpene synthase family. Requires Mg(2+) as cofactor.

It localises to the cytoplasm. It is found in the cytosol. The enzyme catalyses (2E,6E)-farnesyl diphosphate = (-)-germacrene D + diphosphate. The protein operates within secondary metabolite biosynthesis; terpenoid biosynthesis. Its function is as follows. Sesquiterpene synthase involved in germacrene D biosynthesis. Also produces at least 13 additional sesquiterpene products, including germacrene C and (+)-germacrene A, beta-ylangene, (E)-beta-farnesene and (E,E)-alpha-farnesene. The polypeptide is Germacrene D synthase 1 (Pogostemon cablin (Patchouli)).